The sequence spans 2517 residues: Protein capicua homolog (2517 aa).

6 disordered regions span residues Met-1–Tyr-197, Leu-300–Pro-325, Pro-342–Lys-483, Glu-531–Ser-579, Ser-608–Arg-640, and Val-658–Val-767. A compositionally biased stretch (acidic residues) spans Glu-57–Ala-67. The segment covering Glu-91–Arg-101 has biased composition (basic and acidic residues). Low complexity-rich tracts occupy residues Thr-158–Thr-167 and Leu-300–Ser-313. The span at His-396–Pro-405 shows a compositional bias: basic and acidic residues. Pro residues predominate over residues Leu-414–Ser-428. Positions Gly-451–Ala-477 are enriched in low complexity. Positions Ser-608–Val-619 are enriched in polar residues. Residues Asp-677–Ala-686 show a composition bias toward pro residues. Residues Thr-698 to Val-707 are compositionally biased toward polar residues. The segment covering Gly-726–Ala-735 has biased composition (gly residues). A phosphoserine mark is found at Ser-776 and Ser-780. Disordered regions lie at residues Ile-812–Gly-842, Pro-955–Arg-1110, Cys-1179–Val-1220, Ser-1235–Gly-1274, Ser-1290–Glu-1347, Arg-1379–Thr-1539, and Ile-1595–Gly-1628. Residues Glu-937–Pro-955 are interaction with ATXN1. A compositionally biased stretch (polar residues) spans Asp-959–Lys-981. 2 positions are modified to phosphoserine: Ser-1055 and Ser-1082. Basic and acidic residues-rich tracts occupy residues Pro-1087–Arg-1110, Cys-1179–Ser-1188, and Gly-1200–Met-1209. Arg-1099 is modified (omega-N-methylarginine). The HMG box DNA-binding region spans Ile-1109 to Lys-1177. Ser-1186 is subject to Phosphoserine. A compositionally biased stretch (polar residues) spans Ser-1235 to Cys-1245. Phosphoserine is present on Ser-1271. Over residues Gly-1305–Gly-1323 the composition is skewed to low complexity. Ser-1340, Ser-1345, and Ser-1405 each carry phosphoserine. Pro residues predominate over residues Pro-1418–Pro-1430. The span at Ser-1439–Ala-1456 shows a compositional bias: low complexity. Residues Thr-1457–Gly-1474 are compositionally biased toward polar residues. Ser-1609, Ser-1630, and Ser-1648 each carry phosphoserine. Residue Arg-1772 is modified to Asymmetric dimethylarginine. The interval Gln-1799–Pro-1818 is disordered. At Arg-1843 the chain carries Omega-N-methylarginine. Disordered stretches follow at residues Ala-2039–Ala-2064, Ser-2100–Glu-2342, and Ala-2430–Arg-2517. Residues Ala-2051–Ala-2064 show a composition bias toward low complexity. Composition is skewed to pro residues over residues Gly-2110–Pro-2119 and Pro-2136–Pro-2145. Positions Glu-2146–Ser-2155 are enriched in low complexity. Lys-2177 is subject to N6-acetyllysine. A compositionally biased stretch (pro residues) spans Pro-2198–Ala-2209. Thr-2200 carries the phosphothreonine modification. Ser-2203 is modified (phosphoserine). Positions Val-2210–Gly-2225 are enriched in low complexity. A compositionally biased stretch (basic and acidic residues) spans Lys-2249–Glu-2278. Phosphoserine occurs at positions 2260, 2282, 2287, 2291, 2298, and 2306. Residue Thr-2307 is modified to Phosphothreonine. A phosphoserine mark is found at Ser-2311 and Ser-2318. Residues Ala-2457–Thr-2469 show a composition bias toward pro residues. Residue Ser-2504 is modified to Phosphoserine.

Found in a complex with ATXN1 and ATXN1L. In terms of assembly, interacts with ATXN1. Expressed in fetal brain.

It localises to the nucleus. Functionally, transcriptional repressor which plays a role in development of the central nervous system (CNS). In concert with ATXN1 and ATXN1L, involved in brain development. The protein is Protein capicua homolog (CIC) of Homo sapiens (Human).